The sequence spans 86 residues: Translation initiation factor IF-1 3 (86 aa).

Positions 1–72 constitute an S1-like domain; the sequence is MAKEELIEMQ…NKGRVTFRHI (72 aa).

It belongs to the IF-1 family. In terms of assembly, component of the 30S ribosomal translation pre-initiation complex which assembles on the 30S ribosome in the order IF-2 and IF-3, IF-1 and N-formylmethionyl-tRNA(fMet); mRNA recruitment can occur at any time during PIC assembly.

It localises to the cytoplasm. One of the essential components for the initiation of protein synthesis. Stabilizes the binding of IF-2 and IF-3 on the 30S subunit to which N-formylmethionyl-tRNA(fMet) subsequently binds. Helps modulate mRNA selection, yielding the 30S pre-initiation complex (PIC). Upon addition of the 50S ribosomal subunit IF-1, IF-2 and IF-3 are released leaving the mature 70S translation initiation complex. This chain is Translation initiation factor IF-1 3, found in Acidovorax sp. (strain JS42).